Consider the following 137-residue polypeptide: Large ribosomal subunit protein uL13 (137 aa).

The protein belongs to the universal ribosomal protein uL13 family. In terms of assembly, part of the 50S ribosomal subunit.

Functionally, this protein is one of the early assembly proteins of the 50S ribosomal subunit, although it is not seen to bind rRNA by itself. It is important during the early stages of 50S assembly. The sequence is that of Large ribosomal subunit protein uL13 from Methanocaldococcus jannaschii (strain ATCC 43067 / DSM 2661 / JAL-1 / JCM 10045 / NBRC 100440) (Methanococcus jannaschii).